A 266-amino-acid polypeptide reads, in one-letter code: Probable BRI1 kinase inhibitor 1 (266 aa).

Disordered stretches follow at residues 1 to 144 and 167 to 242; these read MTMN…AKTR and FSRH…SEES. Residues 9-30 show a composition bias toward pro residues; the sequence is RSQPPPPHPPLFKPTTPPPPPL. Low complexity predominate over residues 31–40; sequence LSTSTSTSPP. The segment covering 77–93 has biased composition (polar residues); sequence LSHNNYSSKANQHRQTG. Positions 100 to 109 are enriched in basic and acidic residues; that stretch reads SKEKDREYKA. Low complexity-rich tracts occupy residues 210-221 and 229-241; these read LSSAPASLRASP and VGGS…SSEE.

Its function is as follows. Negative regulator of brassinosteroid signaling. This is Probable BRI1 kinase inhibitor 1 (BKI1) from Oryza sativa subsp. indica (Rice).